The following is a 566-amino-acid chain: Type 3 secretion system secretin (566 aa).

Residues 1–22 form the signal peptide; it reads MKKFNIKSLTLLIVLLPLIVNA.

This sequence belongs to the bacterial secretin family. T3SS SctC subfamily. As to quaternary structure, the core secretion machinery of the T3SS is composed of approximately 20 different proteins, including cytoplasmic components, a base, an export apparatus and a needle. This subunit is part of the base, which anchors the injectisome in the bacterial cell envelope. Forms a stable homooligomeric complex.

Its subcellular location is the cell outer membrane. Its function is as follows. Component of the type III secretion system (T3SS), also called injectisome, which is used to inject bacterial effector proteins into eukaryotic host cells. Forms a ring-shaped multimeric structure with an apparent central pore in the outer membrane. In Shigella sonnei, this protein is Type 3 secretion system secretin.